Consider the following 190-residue polypeptide: FPAMPLSSLFANAVLRAQHLHQLAADTYKEFERAYIPEGQRYSIQNAQAAFCFSETIPAPTGKDEAQQRSDVELLRFSLVLIQSWLGPLQFLSRVFTNSLVFGTSDRVYEKLKDLEEGIQALMRELEDGSPRAGQILKQTYDKFDTNLRSDDALLKNYGLLSCFKKDLHKAETYLRVMKCRRFVESSCAF.

Residue H19 coordinates Zn(2+). C52 and C163 form a disulfide bridge. At S105 the chain carries Phosphoserine. Position 172 (E172) interacts with Zn(2+). C180 and C188 are disulfide-bonded.

Belongs to the somatotropin/prolactin family.

The protein resides in the secreted. Functionally, plays an important role in growth control. Its major role in stimulating body growth is to stimulate the liver and other tissues to secrete IGF1. It stimulates both the differentiation and proliferation of myoblasts. It also stimulates amino acid uptake and protein synthesis in muscle and other tissues. The sequence is that of Somatotropin (GH1) from Vulpes vulpes (Red fox).